A 779-amino-acid chain; its full sequence is Nucleolar complex protein 3 homolog (779 aa).

Disordered stretches follow at residues 1-20 (MGFASASREEKLKMMKTNKT) and 100-189 (NAKR…SHLS). The segment covering 114–124 (DSDEDEDEDDV) has biased composition (acidic residues). Over residues 136–160 (EEGHEELLPIKLKDGTLIRPTREKE) the composition is skewed to basic and acidic residues. The span at 161–178 (VEEQEEEEKSDIDEGEED) shows a compositional bias: acidic residues. Residues 434–474 (AKKYQIKKERASKTAKKYKKQLARLEADLLEVEAEESLTKK) adopt a coiled-coil conformation.

The protein belongs to the CBF/MAK21 family.

It is found in the nucleus. The protein resides in the nucleolus. The chain is Nucleolar complex protein 3 homolog from Caenorhabditis briggsae.